The sequence spans 99 residues: Small ribosomal subunit protein uS19 (99 aa).

The tract at residues 76–99 (PTRSFRGHAGGGKAEKGGSAPRKK) is disordered.

Belongs to the universal ribosomal protein uS19 family.

Its function is as follows. Protein S19 forms a complex with S13 that binds strongly to the 16S ribosomal RNA. The protein is Small ribosomal subunit protein uS19 of Pelodictyon phaeoclathratiforme (strain DSM 5477 / BU-1).